Here is a 2391-residue protein sequence, read N- to C-terminus: Filaggrin-2 (2391 aa).

Positions 1–81 are S-100-like; that stretch reads MTDLLRSVVT…TEFLLMIFKL (81 aa). EF-hand domains follow at residues 8-43 and 49-84; these read VVTVIDVFYKYTKQDGECGTLSKGELKELLEKELHP and DDPDTVDVIMHMLDRDHDRRLDFTEFLLMIFKLTMA. Ca(2+) contacts are provided by aspartate 62, aspartate 64, aspartate 66, arginine 68, and glutamate 73. Disordered stretches follow at residues 96–275, 349–369, and 406–2391; these read ASGS…DSGR, SYSQRGYGARENGQPQNCGGQ, and NSSS…LSRH. A compositionally biased stretch (basic residues) spans 98 to 107; sequence GSKKHRRGHR. Acidic residues predominate over residues 111–121; sequence EESETEEDEED. Residues 149–163 are compositionally biased toward basic residues; it reads GTVKCRHGSNSRRLG. The span at 166–176 shows a compositional bias: polar residues; sequence GNLSSSGNQEG. The span at 193 to 209 shows a compositional bias: basic and acidic residues; that stretch reads GKDRHGSSSVELRERIN. Residues 245–289 form a Filaggrin 1 repeat; the sequence is ETSGHESNSTQSRIREQKLGSSCSGSGDSGRRSHACGYSNSSGCG. 2 stretches are compositionally biased toward polar residues: residues 420–442 and 449–476; these read GSGSSQSTSFEQHGTGLSQSSGF and SGQTCGQHESTSSQSLGYDQHGSSSGKT. One copy of the Filaggrin 2 repeat lies at 421–466; that stretch reads SGSSQSTSFEQHGTGLSQSSGFEQHVCGSGQTCGQHESTSSQSLGY. Over residues 480–507 the composition is skewed to gly residues; it reads GQHGSGSGQSSGFGQCGSGSGQSSGFGQ. Residues 508–562 are compositionally biased toward low complexity; that stretch reads HGSVSGQSSGFGQHGSVSGQSSGFGQHESRSRQSSYGQHGSGSSQSSGYGQYGSR. Gly residues predominate over residues 568–604; sequence GQHGLGSGQSTGFGQYGSGSGQSSGFGQHGSGSGQSS. Residues 605–655 show a composition bias toward low complexity; sequence GFGQHESRSGQSSYGQHSSGSSQSSGYGQHGSRQTSGFGQHGSGSSQSTGF. Positions 656–666 are enriched in gly residues; the sequence is GQYGSGSGQSS. Over residues 667-734 the composition is skewed to low complexity; the sequence is GFGQHVSGSG…SSGQSSSFGQ (68 aa). Gly residues predominate over residues 735-756; the sequence is HGSGSGQSSGFGQHGSGSGQSS. The segment covering 757–807 has biased composition (low complexity); sequence GFGQHESRSGQSSYGQHSSGSSQSSGYGQHGSRQTSGFGQHGSGSSQSTGF. Gly residues predominate over residues 808 to 831; sequence GQYGSGSGQSAGFGQHGSGSGQSS. A compositionally biased stretch (low complexity) spans 832-884; that stretch reads GFGQHESRSHQSSYGQHGSGSSQSSGYGQHGSSSGQTSGFGQHRSSSGQYSGF. Positions 885 to 908 are enriched in gly residues; it reads GQHGSGSGQSSGFGQHGTGSGQYS. Low complexity predominate over residues 918–956; the sequence is HQSSYGQHGSGSSQSSGYGQHGSSSGQTFGFGQHRSGSG. A compositionally biased stretch (gly residues) spans 957-972; it reads QSSGFGQHGSGSGQSS. 2 stretches are compositionally biased toward low complexity: residues 973 to 982 and 994 to 1027; these read GFGQHESGSG and SSQSNYGQHGSGSSQSSGYGQHGSSSGQTTGFGQ. Residues 1019 to 1051 form a Filaggrin 3 repeat; that stretch reads SGQTTGFGQHRSSSGQYSGFGQHGSGSDQSSGF. Residues 1052–1062 are compositionally biased toward gly residues; that stretch reads GQHGTGSGQSS. Over residues 1063 to 1098 the composition is skewed to low complexity; it reads GFGQYESRSRQSSYGQHGSGSSQSSGYGQHGSNSGQ. One copy of the Filaggrin 4 repeat lies at 1097-1141; sequence GQTSGFGQHRPGSGQSSGFGQYGSGSGQSSGFGQHGSGTGKSSGF. Gly residues predominate over residues 1111–1137; the sequence is QSSGFGQYGSGSGQSSGFGQHGSGTGK. Residues 1148–1174 show a composition bias toward low complexity; the sequence is SGQSSYGQHGTGSSQSSGCGQHESGSG. Polar residues predominate over residues 1175–1198; sequence PTTSFGQHVSGSDNFSSSGQHISD. Gly residues predominate over residues 1206–1220; that stretch reads GQYGSGSGQSTGLGQ. Positions 1226-1249 are enriched in polar residues; that stretch reads VESGSTVHGRQETTHGQTINTTRH. Residues 1250 to 1263 show a composition bias toward low complexity; sequence SQSGQGQSTQTGSR. Position 1276 is a phosphoserine (serine 1276). Residues 1329–1343 are compositionally biased toward polar residues; the sequence is HGQSTQTGSRTSGRQ. Residues 1346 to 1355 are compositionally biased toward basic and acidic residues; the sequence is SHSDATDSEV. Over residues 1366 to 1377 the composition is skewed to polar residues; the sequence is QEQTHSQAGSQH. The span at 1378–1390 shows a compositional bias: basic and acidic residues; it reads GESESTVHERHET. Residues 1406–1416 are compositionally biased toward low complexity; it reads HGQSTQRGSRT. Residues serine 1427 and serine 1428 each carry the phosphoserine modification. Positions 1439 to 1459 are enriched in polar residues; sequence RPQSQEQTHGQAGSQHGESGS. One copy of the Filaggrin 5 repeat lies at 1455-1510; it reads GESGSTVHGRHGTTHGQTGDTTRHAHYHHGKSTQRGSSTTGRRGSGHSESSDSEVH. The span at 1487-1496 shows a compositional bias: low complexity; that stretch reads TQRGSSTTGR. 2 positions are modified to phosphoserine: serine 1504 and serine 1505. Over residues 1510–1529 the composition is skewed to low complexity; the sequence is HSGGSHTHSGHTHGQSGSQH. The segment covering 1544–1559 has biased composition (polar residues); it reads HGQTGDTTRHSYSGHE. The segment covering 1560–1572 has biased composition (low complexity); that stretch reads QTTQTGSRTTGRQ. 2 stretches are compositionally biased toward basic and acidic residues: residues 1575–1584 and 1605–1618; these read SHSESTDSEV and QHEEPEFTVHERHG. At serine 1579 the chain carries Phosphoserine. Residues 1607–1662 form a Filaggrin 6 repeat; the sequence is EEPEFTVHERHGTTHGQIGDTTGHSHSGHGQSTQRGSRTTGRQRSSHSESSDSEVH. The segment covering 1627-1649 has biased composition (low complexity); it reads TTGHSHSGHGQSTQRGSRTTGRQ. A compositionally biased stretch (basic and acidic residues) spans 1652 to 1661; sequence SHSESSDSEV. Phosphoserine occurs at positions 1656 and 1657. Composition is skewed to low complexity over residues 1662–1686 and 1711–1720; these read HSGVSHTHTGHTHGQAGSQHGQSES and GLTTQTGSRT. The span at 1755–1768 shows a compositional bias: basic and acidic residues; it reads QHGESESIVHERHG. The Filaggrin 7 repeat unit spans residues 1757-1812; the sequence is GESESIVHERHGTIHGQTGDTTRHAHSGHGQSTQTGSRTTGRRSSGHSEYSDSEGH. The segment covering 1784–1795 has biased composition (low complexity); sequence GHGQSTQTGSRT. Phosphoserine is present on residues serine 1800 and serine 1807. The segment covering 1834–1845 has biased composition (basic and acidic residues); the sequence is GESESIVDERHG. Residues 1849-1873 show a composition bias toward low complexity; it reads GQTGDTSGHSQSGHGQSTQSGSSTT. A compositionally biased stretch (basic and acidic residues) spans 1879–1888; it reads GHSESSDSEV. Residues serine 1883, serine 1884, and serine 1959 each carry the phosphoserine modification. 2 Filaggrin repeats span residues 1928–1964 and 1984–2039; these read DTTEHGHPSHGQTIQTGSRTTGRRGSGHSEYSDSEGP and PESG…SEGH. Composition is skewed to low complexity over residues 1963-1982 and 2013-2022; these read GPSGVSHTHSGHTHGQAGSH and GQSTQRGSRT. The residue at position 2034 (serine 2034) is a Phosphoserine. Composition is skewed to low complexity over residues 2039–2059, 2114–2125, and 2162–2176; these read HSGVSHTHSGHAHGQAGSQHG, HSGVSHTHSGHT, and HGQSTQTGSRTTGRQ. The Filaggrin 10 repeat unit spans residues 2134–2189; sequence GESGSAIHGRQGTIHGQTGDTTRHGQSGHGQSTQTGSRTTGRQRSSHSESSDSEVH. Over residues 2179 to 2190 the composition is skewed to basic and acidic residues; sequence SHSESSDSEVHS. Low complexity-rich tracts occupy residues 2201–2211, 2219–2228, and 2238–2247; these read HSQAGSRHGQS, QGTTHGQTGD, and GQSTQRGSRT. Residues 2273 to 2288 show a composition bias toward polar residues; that stretch reads GHIQGQAGSQQRQPGS. The span at 2320–2331 shows a compositional bias: low complexity; the sequence is SRSSRASHFQSH. The segment covering 2367-2391 has biased composition (polar residues); the sequence is SRKSISNSHLSWSTDSTANKQLSRH.

The protein belongs to the S100-fused protein family. This sequence in the N-terminal section; belongs to the S-100 family. Post-translationally, deiminated by PADI1, PADI2 or PADI3 in vitro. The deiminated form is degraded by calpain-1/CAPN1 more quickly and into shorter peptides than the intact protein. In terms of processing, may be processed by calpain-1/CAPN1 in the uppermost epidermal layers. Expressed in skin, thymus, stomach and placenta, but not detected in heart, brain, liver, lung, bone marrow, small intestine, spleen, prostate, colon, adrenal gland, kidney, pancreas, mammary gland, bladder, thyroid, salivary gland and trachea. Weakly expressed in esophagus, tonsils and testis (at protein level). In the skin, strongly expressed in the upper stratum granulosum and lower stratum corneum, but not detected in the upper stratum corneum (at protein level). In scalp hair follicles, mainly restricted within the granular and cornified cells surrounding the infundibular outer root sheath, with weak expression in central and proximal outer root sheath (at protein level). Tends to be down-regulated in sporiatic lesions compared to non-lesional skin inthe same patients.

It localises to the cytoplasm. The protein localises to the cytoplasmic granule. Functionally, essential for normal cell-cell adhesion in the cornified cell layers. Important for proper integrity and mechanical strength of the stratum corneum of the epidermis. The protein is Filaggrin-2 (FLG2) of Homo sapiens (Human).